Reading from the N-terminus, the 471-residue chain is MVTTVQRTFRKEVLHALHKAKEVNHAVLISYSRQIESLDPLSFFNYGAKKYTGNRFFWSDPESELTIVGLGKEAVFQTNQKNSERYREVFEQWERFKKTAFHIYEEEKLQHSAVGPVLFGGFSFDPCEERGSQWDHFSEGDFFVPALMLTMTAEGPFLTVNRWVSGGEDAEAVLEGLKAFAAEFMVPDFKQEDQAVIAAAEELDKDDWLKAIETATSQIKEKQYDKVVLARELLLTFDGPIQIEPVLKTLLDDQQTSYVFAIEQEGKTFVGASPERLIKRDGGTVMSSCLAGSIKRGVNEEDDRRIGLELLNDEKNLLEHDIVVGMIHNAFVSSCSEVEKPDGPVLYKTKSVQHLFTPIVGQLRESASIFDLIEKLHPTPALGGSPQEKAVDVIREIEPMSRGWYAAPIGWIDSQDNGEFAVAIRSGLIEGSTARLFAGCGIVEDSEPISEYEETQIKLKPMISALGGERR.

The active-site Proton acceptor is lysine 226. Residue glutamate 275 is the Proton donor of the active site. Positions 319 and 454 each coordinate Mg(2+).

Belongs to the isochorismate synthase family. Mg(2+) serves as cofactor.

It carries out the reaction chorismate = isochorismate. It participates in quinol/quinone metabolism; 1,4-dihydroxy-2-naphthoate biosynthesis; 1,4-dihydroxy-2-naphthoate from chorismate: step 1/7. Its pathway is quinol/quinone metabolism; menaquinone biosynthesis. Functionally, catalyzes the conversion of chorismate to isochorismate. The sequence is that of Isochorismate synthase MenF from Bacillus subtilis (strain 168).